Here is a 456-residue protein sequence, read N- to C-terminus: Adenylosuccinate lyase (456 aa).

Residues Arg-15–Tyr-16, Asn-90–Asp-92, and Thr-122–Ser-123 each bind N(6)-(1,2-dicarboxyethyl)-AMP. His-171 (proton donor/acceptor) is an active-site residue. Gln-247 provides a ligand contact to N(6)-(1,2-dicarboxyethyl)-AMP. Ser-295 (proton donor/acceptor) is an active-site residue. N(6)-(1,2-dicarboxyethyl)-AMP-binding positions include Ser-296, Lys-301–Asn-303, Asn-309, Arg-335, and Ser-340–Arg-344.

This sequence belongs to the lyase 1 family. Adenylosuccinate lyase subfamily. In terms of assembly, homotetramer. Residues from neighboring subunits contribute catalytic and substrate-binding residues to each active site.

It catalyses the reaction N(6)-(1,2-dicarboxyethyl)-AMP = fumarate + AMP. The catalysed reaction is (2S)-2-[5-amino-1-(5-phospho-beta-D-ribosyl)imidazole-4-carboxamido]succinate = 5-amino-1-(5-phospho-beta-D-ribosyl)imidazole-4-carboxamide + fumarate. The protein operates within purine metabolism; AMP biosynthesis via de novo pathway; AMP from IMP: step 2/2. Its pathway is purine metabolism; IMP biosynthesis via de novo pathway; 5-amino-1-(5-phospho-D-ribosyl)imidazole-4-carboxamide from 5-amino-1-(5-phospho-D-ribosyl)imidazole-4-carboxylate: step 2/2. In terms of biological role, catalyzes two reactions in de novo purine nucleotide biosynthesis. Catalyzes the breakdown of 5-aminoimidazole- (N-succinylocarboxamide) ribotide (SAICAR or 2-[5-amino-1-(5-phospho-beta-D-ribosyl)imidazole-4-carboxamido]succinate) to 5-aminoimidazole-4-carboxamide ribotide (AICAR or 5-amino-1-(5-phospho-beta-D-ribosyl)imidazole-4-carboxamide) and fumarate, and of adenylosuccinate (ADS or N(6)-(1,2-dicarboxyethyl)-AMP) to adenosine monophosphate (AMP) and fumarate. The sequence is that of Adenylosuccinate lyase (purB) from Buchnera aphidicola subsp. Acyrthosiphon pisum (strain APS) (Acyrthosiphon pisum symbiotic bacterium).